A 243-amino-acid chain; its full sequence is Ribosomal RNA small subunit methyltransferase E 2 (243 aa).

Belongs to the RNA methyltransferase RsmE family.

The protein localises to the cytoplasm. It catalyses the reaction uridine(1498) in 16S rRNA + S-adenosyl-L-methionine = N(3)-methyluridine(1498) in 16S rRNA + S-adenosyl-L-homocysteine + H(+). Functionally, specifically methylates the N3 position of the uracil ring of uridine 1498 (m3U1498) in 16S rRNA. Acts on the fully assembled 30S ribosomal subunit. The chain is Ribosomal RNA small subunit methyltransferase E 2 (rsmE2) from Borreliella burgdorferi (strain ATCC 35210 / DSM 4680 / CIP 102532 / B31) (Borrelia burgdorferi).